The following is a 176-amino-acid chain: Protein MAL2 (176 aa).

The Cytoplasmic segment spans residues 1–34 (MSAGGAPVPPPPNPAMSFPAPRVTLPAGPDILRT). In terms of domain architecture, MARVEL spans 31 to 175 (ILRTYSGAFV…SLGLALRRWR (145 aa)). A helical transmembrane segment spans residues 35–55 (YSGAFVCLEIVFGGLVWILVA). The Lumenal portion of the chain corresponds to 56 to 66 (SSNVPLPLLQG). The helical transmembrane segment at 67-87 (WVMFVSVTAFVCSLLFLGVFL) threads the bilayer. The Cytoplasmic segment spans residues 88–102 (SGVVTQINANWNFLD). The chain crosses the membrane as a helical span at residues 103–123 (FAYHFTVFVFYFGAFLLEAAT). The Lumenal segment spans residues 124–149 (TSLHDLRCNRTMTVQPLLSDNQYNIN). N132 carries N-linked (GlcNAc...) asparagine glycosylation. The helical transmembrane segment at 150-170 (VAATIFAFVTTACYGCSLGLA) threads the bilayer. The Cytoplasmic segment spans residues 171–176 (LRRWRP).

This sequence belongs to the MAL family. In terms of assembly, interacts with TPD52L2.

It localises to the cell membrane. It is found in the apical cell membrane. In terms of biological role, member of the machinery of polarized transport. Required for the indirect transcytotic route at the step of the egress of the transcytosing cargo from perinuclear endosomes in order for it to travel to the apical surface via a raft-dependent pathway. The protein is Protein MAL2 (MAL2) of Bos taurus (Bovine).